We begin with the raw amino-acid sequence, 366 residues long: Phosphate acyltransferase (366 aa).

A disordered region spans residues 334 to 366; sequence ESAKNKETQSKQASTKNTAPKTSETTKESQQSL. Residues 343–366 are compositionally biased toward polar residues; sequence SKQASTKNTAPKTSETTKESQQSL.

The protein belongs to the PlsX family. Homodimer. Probably interacts with PlsY.

It localises to the cytoplasm. The catalysed reaction is a fatty acyl-[ACP] + phosphate = an acyl phosphate + holo-[ACP]. It functions in the pathway lipid metabolism; phospholipid metabolism. Its function is as follows. Catalyzes the reversible formation of acyl-phosphate (acyl-PO(4)) from acyl-[acyl-carrier-protein] (acyl-ACP). This enzyme utilizes acyl-ACP as fatty acyl donor, but not acyl-CoA. The sequence is that of Phosphate acyltransferase from Onion yellows phytoplasma (strain OY-M).